A 119-amino-acid chain; its full sequence is Large ribosomal subunit protein bL20 (119 aa).

The protein belongs to the bacterial ribosomal protein bL20 family.

Functionally, binds directly to 23S ribosomal RNA and is necessary for the in vitro assembly process of the 50S ribosomal subunit. It is not involved in the protein synthesizing functions of that subunit. The chain is Large ribosomal subunit protein bL20 from Listeria innocua serovar 6a (strain ATCC BAA-680 / CLIP 11262).